We begin with the raw amino-acid sequence, 204 residues long: bMERB domain-containing protein 1 (204 aa).

The region spanning 3 to 150 is the bMERB domain; the sequence is LKQSLSTHLE…EQEEDKEMAD (148 aa). Residues 162 to 187 form a disordered region; that stretch reads VTKSPASSRAEKKAEPPPSKPTVAKT.

The sequence is that of bMERB domain-containing protein 1 from Homo sapiens (Human).